The chain runs to 431 residues: Enolase (431 aa).

(2R)-2-phosphoglycerate is bound at residue Gln-163. Catalysis depends on Glu-205, which acts as the Proton donor. Residues Asp-242, Glu-288, and Asp-315 each contribute to the Mg(2+) site. 4 residues coordinate (2R)-2-phosphoglycerate: Lys-340, Arg-369, Ser-370, and Lys-391. Lys-340 serves as the catalytic Proton acceptor.

The protein belongs to the enolase family. Requires Mg(2+) as cofactor.

It is found in the cytoplasm. The protein resides in the secreted. It localises to the cell surface. It catalyses the reaction (2R)-2-phosphoglycerate = phosphoenolpyruvate + H2O. Its pathway is carbohydrate degradation; glycolysis; pyruvate from D-glyceraldehyde 3-phosphate: step 4/5. Its function is as follows. Catalyzes the reversible conversion of 2-phosphoglycerate (2-PG) into phosphoenolpyruvate (PEP). It is essential for the degradation of carbohydrates via glycolysis. The sequence is that of Enolase from Acholeplasma laidlawii (strain PG-8A).